The chain runs to 74 residues: uncharacterized protein (74 aa).

Positions 29-63 (LNSKKSALQKDKELQQQAKAQESALAGEELRRRAL) form a coiled coil.

This is an uncharacterized protein from Pseudoalteromonas phage PM2 (Bacteriophage PM2).